A 419-amino-acid chain; its full sequence is Potassium/proton antiporter CemA (419 aa).

4 consecutive transmembrane segments (helical) span residues 196 to 216, 297 to 317, 344 to 364, and 371 to 391; these read LASIQYGFFLLLLPWIVTLLF, IIELITDFIGIFTITVILCIA, ILLITDLCIGFHSPHGWEVLI, and FGFVPNQYITSFFVSTFPVVL.

The protein belongs to the CemA family.

It is found in the plastid. The protein resides in the chloroplast inner membrane. It carries out the reaction K(+)(in) + H(+)(out) = K(+)(out) + H(+)(in). Functionally, contributes to K(+)/H(+) antiport activity by supporting proton efflux to control proton extrusion and homeostasis in chloroplasts in a light-dependent manner to modulate photosynthesis. Prevents excessive induction of non-photochemical quenching (NPQ) under continuous-light conditions. Indirectly promotes efficient inorganic carbon uptake into chloroplasts. This is Potassium/proton antiporter CemA from Chara vulgaris (Common stonewort).